We begin with the raw amino-acid sequence, 478 residues long: MELPATKLRIGLVIFPLILLTIAPILYLFFGYPLYYSTSTYKHLSNSSSSSAISSPSRYNHSSSSSDSYKTEDSEPSSYDNDYDDTYHDPKSSSLHNNDRLSISSSNGHHQVTPKKEHRRKKRKRKCDIFSGEWIPNPKAPYYTNTTCRAIHEHQNCIKYGRPDLGFMKWRWKPKECDLPLFDPYEFLEIVRGTRMAFVGDSVSRNHVQSLICLLSRVEHPEGDSQQEFNFQRWKYKTYNFTIATFWTTHLVRAEETETGPTGPNSFYNLYLDEPDPTWASQIGEFDYIIISSGQWFFRPLFLFDKQKRIGCLYCYIPGVRNVGAHFAYRRALRTTFKTILGLENFKGEVFLRTFAPSHFEGGEWDKGGNCLKTRPYRSNETELDGMNLETHSIQLDEFRIANRDKNRNDGLNLRLLDVTQMMLLRPDGHPSRFGHKREDKVILYNDCVHWCLPGPIDSWNDFLLDMLKNRDLKRLKY.

Residues 10–30 (IGLVIFPLILLTIAPILYLFF) traverse the membrane as a helical; Signal-anchor for type II membrane protein segment. Residues 50-68 (SSAISSPSRYNHSSSSSDS) show a composition bias toward low complexity. Residues 50 to 125 (SSAISSPSRY…KEHRRKKRKR (76 aa)) are disordered. Positions 92–110 (SSSLHNNDRLSISSSNGHH) are enriched in polar residues. The span at 112-125 (VTPKKEHRRKKRKR) shows a compositional bias: basic residues. A GDS motif motif is present at residues 200–202 (GDS). The DCXHWCLPGXXDXWN motif motif lies at 447 to 461 (DCVHWCLPGPIDSWN).

This sequence belongs to the PC-esterase family. TBL subfamily.

The protein resides in the membrane. Functionally, may act as a bridging protein that binds pectin and other cell wall polysaccharides. Probably involved in maintaining esterification of pectins. May be involved in the specific O-acetylation of cell wall polymers. This is Protein trichome birefringence-like 20 (TBL20) from Arabidopsis thaliana (Mouse-ear cress).